The following is a 312-amino-acid chain: MDNCNAWDKLLSQNESTINSTETATITAIIYSPSSKTLHQFINICFPEGSNSILDTTLINYATIGWTNDLKENYSVDVYTLIRNTDDALDLLKPFLQEHSSKVRWLILLDWTLNDQKLWLNELSYAFNKIKQLNDDNEFSVWCLNSGEILNLQRHTTVWQSVHIDFILQTLRSFCYFNDSSLFYICEDHTEEKREEAQRLKYQELLKHFCEDRDMKDHIEMVKRSEILIPKGCDSIGLIKTVDERFEPTEVKEQHFLARYMDFIPTIDKIREDRKTTSGIDLDKLYPLEVFKVNIQEELGKMFAKYRENSRI.

Belongs to the dynein light intermediate chain DYN3 family. In terms of assembly, the dynein complex consists of at least two heavy chains and a number of intermediate and light chains. Interacts with DYN1.

It is found in the cytoplasm. It localises to the cytoskeleton. Its function is as follows. Component of the cytoplasmic dynein which acts as a motor for the intracellular retrograde motility of vesicles and organelles along microtubules. May play an important role in the proper orientation of the mitotic spindle into the budding daughter cell yeast. Probably required for normal progression of the cell cycle. This Saccharomyces cerevisiae (strain ATCC 204508 / S288c) (Baker's yeast) protein is Cytoplasmic dynein intermediate light chain DYN3 (DYN3).